We begin with the raw amino-acid sequence, 549 residues long: uncharacterized protein (549 aa).

12 helical membrane passes run 27–47, 108–128, 146–166, 197–217, 233–253, 265–285, 308–328, 352–372, 399–419, 434–454, 472–492, and 501–521; these read ILRFAIPTFFFALFSAAYVFV, PIVVILNAITIFVPLGTGVIF, TGLVSTTLFALVTQIIVLAIA, AVAIGSEYVYILIGFNIIPML, FIAIVPPLSNLLNVLFVFLLV, VAAILVYFITFMAYVVYLISL, FLVISMVGLASFFRNGSLSIL, LVLLTGPIAIANLTSAAIFGV, TLLVCLVFAALLYLILAVGLG, LMLANQFSLIVQAQVFFVAIG, IVSLMQGVIVFVPLLFIFQAI, and IFIWLLTANAALAGLINVLIG.

Its subcellular location is the cell membrane. This is an uncharacterized protein from Mycoplasma pneumoniae (strain ATCC 29342 / M129 / Subtype 1) (Mycoplasmoides pneumoniae).